We begin with the raw amino-acid sequence, 203 residues long: ATP phosphoribosyltransferase (203 aa).

The protein belongs to the ATP phosphoribosyltransferase family. Short subfamily.

It localises to the cytoplasm. It catalyses the reaction 1-(5-phospho-beta-D-ribosyl)-ATP + diphosphate = 5-phospho-alpha-D-ribose 1-diphosphate + ATP. Its pathway is amino-acid biosynthesis; L-histidine biosynthesis; L-histidine from 5-phospho-alpha-D-ribose 1-diphosphate: step 1/9. Catalyzes the condensation of ATP and 5-phosphoribose 1-diphosphate to form N'-(5'-phosphoribosyl)-ATP (PR-ATP). Has a crucial role in the pathway because the rate of histidine biosynthesis seems to be controlled primarily by regulation of HisG enzymatic activity. This is ATP phosphoribosyltransferase from Thermococcus kodakarensis (strain ATCC BAA-918 / JCM 12380 / KOD1) (Pyrococcus kodakaraensis (strain KOD1)).